Consider the following 179-residue polypeptide: Peptidyl-tRNA hydrolase (179 aa).

Residue Tyr14 participates in tRNA binding. His19 (proton acceptor) is an active-site residue. The tRNA site is built by Tyr60, Asn62, and Asn108.

This sequence belongs to the PTH family. In terms of assembly, monomer.

The protein localises to the cytoplasm. The catalysed reaction is an N-acyl-L-alpha-aminoacyl-tRNA + H2O = an N-acyl-L-amino acid + a tRNA + H(+). Functionally, hydrolyzes ribosome-free peptidyl-tRNAs (with 1 or more amino acids incorporated), which drop off the ribosome during protein synthesis, or as a result of ribosome stalling. Its function is as follows. Catalyzes the release of premature peptidyl moieties from peptidyl-tRNA molecules trapped in stalled 50S ribosomal subunits, and thus maintains levels of free tRNAs and 50S ribosomes. The protein is Peptidyl-tRNA hydrolase of Mycoplasma mobile (strain ATCC 43663 / 163K / NCTC 11711) (Mesomycoplasma mobile).